The chain runs to 151 residues: 3-dehydroquinate dehydratase (151 aa).

Tyr-24 serves as the catalytic Proton acceptor. Asn-76, His-82, and Asp-89 together coordinate substrate. His-102 functions as the Proton donor in the catalytic mechanism. Residues 103–104 (VS) and Arg-113 contribute to the substrate site.

The protein belongs to the type-II 3-dehydroquinase family. Homododecamer.

The enzyme catalyses 3-dehydroquinate = 3-dehydroshikimate + H2O. The protein operates within metabolic intermediate biosynthesis; chorismate biosynthesis; chorismate from D-erythrose 4-phosphate and phosphoenolpyruvate: step 3/7. Catalyzes a trans-dehydration via an enolate intermediate. In Rhodopseudomonas palustris (strain ATCC BAA-98 / CGA009), this protein is 3-dehydroquinate dehydratase.